The primary structure comprises 197 residues: Probable inosine/xanthosine triphosphatase (197 aa).

Residue 9 to 14 coordinates substrate; sequence TSNPIK. Mg(2+) is bound by residues D36 and D65.

This sequence belongs to the YjjX NTPase family. Homodimer. Mg(2+) is required as a cofactor. It depends on Mn(2+) as a cofactor.

It catalyses the reaction XTP + H2O = XDP + phosphate + H(+). The catalysed reaction is ITP + H2O = IDP + phosphate + H(+). Phosphatase that hydrolyzes non-canonical purine nucleotides such as XTP and ITP to their respective diphosphate derivatives. Probably excludes non-canonical purines from DNA/RNA precursor pool, thus preventing their incorporation into DNA/RNA and avoiding chromosomal lesions. The polypeptide is Probable inosine/xanthosine triphosphatase (Aeropyrum pernix (strain ATCC 700893 / DSM 11879 / JCM 9820 / NBRC 100138 / K1)).